Reading from the N-terminus, the 1247-residue chain is Structural polyprotein (1247 aa).

The interval 52 to 103 is disordered; the sequence is ALRTVPQKPRRTRKTKKQKQVKQEQQSTRNQKKKAPKQKQTQKKKRPGRRER. Composition is skewed to basic residues over residues 59–71 and 81–100; these read KPRR…KQKQ and NQKK…RPGR. The segment at 86–99 is ribosome-binding; the sequence is APKQKQTQKKKRPG. Residues Cys112 and Cys127 are joined by a disulfide bond. In terms of domain architecture, Peptidase S3 spans 112–260; that stretch reads CIFEVKHEGK…KITPEGSVEW (149 aa). The active-site Charge relay system is the His138. The interaction with spike glycoprotein E2 stretch occupies residues 154–159; the sequence is KRSSKY. Residues Asp160 and Ser212 each act as charge relay system in the active site. Positions 261–273 are functions as an uncleaved signal peptide for the precursor of protein E3/E2; sequence SLALPVMCLLANT. Disulfide bonds link Cys268–Cys277, Cys282–Cys286, Cys285–Cys317, Cys343–Cys449, Cys346–Cys352, Cys415–Cys429, Cys477–Cys590, Cys525–Cys549, and Cys527–Cys544. A glycan (N-linked (GlcNAc...) asparagine; by host) is linked at Asn272. The Extracellular segment spans residues 325-691; the sequence is NARENFNVYK…YYYELYPTTT (367 aa). Asn587 carries an N-linked (GlcNAc...) asparagine; by host glycan. Residues 692 to 712 traverse the membrane as a helical segment; that stretch reads IAVLAAASIVVASLVSLSLGM. Topologically, residues 713–747 are cytoplasmic; that stretch reads CICARRRCITPYELTPGATIPFLLGVLCCVKTAKA. The segment at 715–719 is interaction with the capsid protein; the sequence is CARRR. S-palmitoyl cysteine; by host attachment occurs at residues Cys720, Cys740, and Cys741. The tract at residues 720–740 is transient transmembrane before p62-6K protein processing; it reads CITPYELTPGATIPFLLGVLC. Cys720 and Cys741 are disulfide-bonded. Topologically, residues 748 to 762 are extracellular; it reads ASYYEAATYLWNEQQ. The helical transmembrane segment at 763–783 threads the bilayer; that stretch reads PLFWLQLLIPLSAAIVACNCL. Residues 784–787 lie on the Cytoplasmic side of the membrane; sequence KLLP. A helical transmembrane segment spans residues 788–808; that stretch reads CCCKTLTFLAVMSIGARTVSA. Over 809–1223 the chain is Extracellular; the sequence is YEHATVIPNT…AMSWVQKITG (415 aa). 4 disulfides stabilise this stretch: Cys857-Cys922, Cys870-Cys902, Cys871-Cys904, and Cys876-Cys886. Residues 892 to 909 form an E1 fusion peptide loop region; it reads VYPFMWGGAYCFCDAENT. N-linked (GlcNAc...) asparagine; by host glycans are attached at residues Asn949 and Asn1078. Disulfide bonds link Cys1067–Cys1079, Cys1109–Cys1184, Cys1114–Cys1188, and Cys1136–Cys1178. A helical transmembrane segment spans residues 1224–1244; it reads GVGLVVAIAALILIIVLCVSF. Cys1241 carries the S-palmitoyl cysteine; by host lipid modification. Over 1245–1247 the chain is Cytoplasmic; the sequence is SRH.

Homodimer. Homomultimer. Interacts with host karyopherin KPNA4; this interaction allows the nuclear import of the viral capsid protein. Interacts with spike glycoprotein E2. Interacts with host IRAK1; the interaction leads to inhibition of IRAK1-dependent signaling. As to quaternary structure, the precursor of protein E3/E2 and E1 form a heterodimer shortly after synthesis. In terms of assembly, the precursor of protein E3/E2 and E1 form a heterodimer shortly after synthesis. Processing of the precursor of protein E3/E2 into E2 and E3 results in a heterodimer of the spike glycoproteins E2 and E1. Spike at virion surface are constituted of three E2-E1 heterodimers. After target cell attachment and endocytosis, E1 change conformation to form homotrimers. Interacts with 6K protein. Interacts with spike glycoprotein E1. Processing of the precursor of protein E3/E2 into E2 and E3 results in a heterodimer of the spike glycoproteins E2 and E1. Spike at virion surface are constituted of a trimer of E2-E1 heterodimers. Interacts with 6K protein. Interacts with host MXRA8; this interaction mediates virus entry. As to quaternary structure, oligomer. Interacts with spike glycoprotein E1. Interacts with spike glycoprotein E2. Structural polyprotein: Specific enzymatic cleavages in vivo yield mature proteins. Capsid protein is auto-cleaved during polyprotein translation, unmasking a signal peptide at the N-terminus of the precursor of E3/E2. The remaining polyprotein is then targeted to the host endoplasmic reticulum, where host signal peptidase cleaves it into pE2, 6K and E1 proteins. pE2 is further processed to mature E3 and E2 by host furin in trans-Golgi vesicle. In terms of processing, palmitoylated via thioester bonds. These palmitoylations may induce disruption of the C-terminus transmembrane. This would result in the reorientation of E2 C-terminus from lumenal to cytoplasmic side. Post-translationally, N-glycosylated. Palmitoylated via thioester bonds.

It is found in the virion. Its subcellular location is the host cytoplasm. It localises to the host cell membrane. The protein resides in the virion membrane. The protein localises to the host Golgi apparatus. It is found in the host trans-Golgi network. Its subcellular location is the host endoplasmic reticulum. It catalyses the reaction Autocatalytic release of the core protein from the N-terminus of the togavirus structural polyprotein by hydrolysis of a -Trp-|-Ser- bond.. Possesses a protease activity that results in its autocatalytic cleavage from the nascent structural protein. Following its self-cleavage, the capsid protein transiently associates with ribosomes, and within several minutes the protein binds to viral RNA and rapidly assembles into icosahedric core particles. The resulting nucleocapsid eventually associates with the cytoplasmic domain of the spike glycoprotein E2 at the cell membrane, leading to budding and formation of mature virions. In case of infection, new virions attach to target cells and after clathrin-mediated endocytosis their membrane fuses with the host endosomal membrane. This leads to the release of the nucleocapsid into the cytoplasm, followed by an uncoating event necessary for the genomic RNA to become accessible. The uncoating might be triggered by the interaction of capsid proteins with ribosomes. Binding of ribosomes would release the genomic RNA since the same region is genomic RNA-binding and ribosome-binding. In terms of biological role, provides the signal sequence for the translocation of the precursor of protein E3/E2 to the host endoplasmic reticulum. Mediates pH protection of spike glycoprotein E1 during the transport via the secretory pathway. Its function is as follows. Plays a role in viral attachment to target host cell, by binding to the cell receptor MXRA8. Synthesized as a p62 precursor which is processed by furin at the cell membrane just before virion budding, giving rise to E2-E1 heterodimer. The p62-E1 heterodimer is stable, whereas E2-E1 is unstable and dissociate at low pH. p62 is processed at the last step, presumably to avoid E1 fusion activation before its final export to cell surface. E2 C-terminus contains a transitory transmembrane that would be disrupted by palmitoylation, resulting in reorientation of the C-terminal tail from lumenal to cytoplasmic side. This step is critical since E2 C-terminus is involved in budding by interacting with capsid proteins. This release of E2 C-terminus in cytoplasm occurs lately in protein export, and precludes premature assembly of particles at the endoplasmic reticulum membrane. Functionally, acts as a viroporin that participates in virus glycoprotein processing and transport to the plasma membrane, cell permeabilization and budding of viral particles. Disrupts the calcium homeostasis of the cell, probably at the endoplasmic reticulum level. This leads to cytoplasmic calcium elevation. Because of its lipophilic properties, the 6K protein is postulated to influence the selection of lipids that interact with the transmembrane domains of the glycoproteins, which, in turn, affects the deformability of the bilayer required for the extreme curvature that occurs as budding proceeds. Present in low amount in virions, about 3% compared to viral glycoproteins. Class II viral fusion protein. Fusion activity is inactive as long as E1 is bound to E2 in mature virion. After virus attachment to target cell via host MXRA8 and endocytosis, acidification of the endosome induce dissociation of E1/E2 heterodimer and concomitant trimerization of the E1 subunits. This E1 trimer is fusion active, and promotes release of viral nucleocapsid in cytoplasm after endosome and viral membrane fusion. Efficient fusion requires the presence of cholesterol and sphingolipid in the target membrane. The sequence is that of Structural polyprotein from O'nyong-nyong virus (strain SG650) (ONNV).